Consider the following 439-residue polypeptide: MPIFIDRRLNPKDRSLGNRQRFLRRAREELKRSIRDRVRSGRISDADGEQAVSIPTRSTDEPRFEAAKDSGRREHVLPGNKHFVPGDRLRKPGHGAAGTPDPSMKDSEDDFRFVLSREEVLDLFFEDLELPDMVKLSLKEILAFRPRRAGFAATGSPTNINVGRTMRNSYGRRIALKRPKREEVDAIRQEIAELESGSQSPVARQRIAALQAEVERLERKRRLIAYVDPVDIRFNRFEAQPIPNAKAVMFCLMDVSGSMGEREKDLAKRFFVLLHLFLKCRYDRTEIVFISHTHEAQEVNEETFFYSTQSGGTVVSTALEKMHRIIAERYPGSEWNIYAAQASDGDNAAADSHRCITLLDEEIMRLCQYYAYVEIIDERERHIFGTTENGTSLWRAYSSVNANWPNFQMTRIADAADIYPVFRQLFTRQATAEKLRVRR.

A disordered region spans residues 39 to 106 (RSGRISDADG…AGTPDPSMKD (68 aa)). Basic and acidic residues predominate over residues 58–76 (STDEPRFEAAKDSGRREHV).

It belongs to the UPF0229 family.

The protein is UPF0229 protein Nham_0975 of Nitrobacter hamburgensis (strain DSM 10229 / NCIMB 13809 / X14).